A 200-amino-acid chain; its full sequence is Dephospho-CoA kinase (200 aa).

One can recognise a DPCK domain in the interval 3–200; the sequence is VLGLTGSIGM…LSGKPAAATR (198 aa). 11-16 contributes to the ATP binding site; sequence GMGKTT.

Belongs to the CoaE family.

It localises to the cytoplasm. The enzyme catalyses 3'-dephospho-CoA + ATP = ADP + CoA + H(+). It participates in cofactor biosynthesis; coenzyme A biosynthesis; CoA from (R)-pantothenate: step 5/5. Functionally, catalyzes the phosphorylation of the 3'-hydroxyl group of dephosphocoenzyme A to form coenzyme A. The protein is Dephospho-CoA kinase of Brucella melitensis biotype 1 (strain ATCC 23456 / CCUG 17765 / NCTC 10094 / 16M).